The sequence spans 86 residues: MIPAVVLLLLLLVEQAAALGEPQLCYILDAILFLYGIVLTLLYCRLKIQVRKAAIASYEKSDGVYTGLSTRNQETYETLKHEKPPQ.

An N-terminal signal peptide occupies residues 1 to 18 (MIPAVVLLLLLLVEQAAA). The Extracellular segment spans residues 19–23 (LGEPQ). A helical transmembrane segment spans residues 24 to 44 (LCYILDAILFLYGIVLTLLYC). Residues 45 to 86 (RLKIQVRKAAIASYEKSDGVYTGLSTRNQETYETLKHEKPPQ) are Cytoplasmic-facing. Residues 54-82 (AIASYEKSDGVYTGLSTRNQETYETLKHE) enclose the ITAM domain. Y65 is subject to Phosphotyrosine. S69 is subject to Phosphoserine. Position 76 is a phosphotyrosine (Y76). Residue T78 is modified to Phosphothreonine.

The protein belongs to the CD3Z/FCER1G family. In terms of assembly, igE Fc receptor is a tetramer of an alpha chain, a beta chain, and two disulfide linked gamma chains. Associates with FCGR1A; forms a functional signaling complex. The signaling subunit of immunoglobulin gamma (IgG) Fc receptor complex. As a homodimer or a heterodimer of CD247 and FCER1G, associates with the ligand binding subunit FCGR3A to form a functional receptor complex. Associates with CLEC6A. Interacts with CLEC4E. Interacts (via ITAM domain) with SYK (via SH2 domains); activates SYK, enabling integrin-mediated activation of neutrophils and macrophages. Interacts with CSF2RB and recruits SYK in response to IL3 stimulation; this interaction is direct. Interacts with CD300LH; the interaction may be indirect. Interacts with CD300LD. Interacts with TARM1.

It is found in the cell membrane. Functionally, adapter protein containing an immunoreceptor tyrosine-based activation motif (ITAM) that transduces activation signals from various immunoreceptors. As a component of the high-affinity immunoglobulin E (IgE) receptor, mediates allergic inflammatory signaling in mast cells. As a constitutive component of interleukin-3 receptor complex, selectively mediates interleukin 4/IL4 production by basophils priming T-cells toward effector T-helper 2 subset. Associates with pattern recognition receptors CLEC4D and CLEC4E to form a functional signaling complex in myeloid cells. Binding of mycobacterial trehalose 6,6'-dimycolate (TDM) to this receptor complex leads to phosphorylation of ITAM, triggering activation of SYK, CARD9 and NF-kappa-B, consequently driving maturation of antigen-presenting cells and shaping antigen-specific priming of T-cells toward effector T-helper 1 and T-helper 17 cell subtypes. May function cooperatively with other activating receptors. Functionally linked to integrin beta-2/ITGB2-mediated neutrophil activation. Also involved in integrin alpha-2/ITGA2-mediated platelet activation. The polypeptide is High affinity immunoglobulin epsilon receptor subunit gamma (FCER1G) (Macaca fascicularis (Crab-eating macaque)).